The sequence spans 142 residues: Hemoglobin subunit alpha-2 (142 aa).

In terms of domain architecture, Globin spans 2 to 142 (VLSAADKSNI…VSTVLTSKYR (141 aa)). An O2-binding site is contributed by H59. H88 lines the heme b pocket.

Belongs to the globin family. Heterotetramer of two alpha chains and two beta chains. As to expression, red blood cells.

Functionally, involved in oxygen transport from the lung to the various peripheral tissues. This Bubalus bubalis (Domestic water buffalo) protein is Hemoglobin subunit alpha-2.